The primary structure comprises 113 residues: Hemerythrin (113 aa).

Residues histidine 25, histidine 54, glutamate 58, histidine 73, histidine 77, histidine 101, and aspartate 106 each coordinate Fe cation.

It belongs to the hemerythrin family. Homotrimer.

Its function is as follows. Hemerythrin is a respiratory protein in blood cells of certain marine worms. The oxygen-binding site in each chain contains two iron atoms. This Siphonosoma cumanense (Sipunculan worm) protein is Hemerythrin.